Consider the following 752-residue polypeptide: Multifunctional tryptophan biosynthesis protein (752 aa).

The 200-residue stretch at 3-202 (FTLLIDNYDS…IQMKGGKWGG (200 aa)) folds into the Glutamine amidotransferase type-1 domain. 58 to 60 (GPG) is an L-glutamine binding site. The active-site Nucleophile; for GATase activity is cysteine 86. 136 to 137 (SL) provides a ligand contact to L-glutamine. Residues histidine 176 and glutamate 178 each act as for GATase activity in the active site. The segment at 231–495 (ILNRIHAQRL…DTKAFLRSLI (265 aa)) is indole-3-glycerol phosphate synthase. An N-(5'-phosphoribosyl)anthranilate isomerase region spans residues 509 to 752 (LVKICGIRST…VEAFVKAVRG (244 aa)).

The catalysed reaction is N-(5-phospho-beta-D-ribosyl)anthranilate = 1-(2-carboxyphenylamino)-1-deoxy-D-ribulose 5-phosphate. It catalyses the reaction 1-(2-carboxyphenylamino)-1-deoxy-D-ribulose 5-phosphate + H(+) = (1S,2R)-1-C-(indol-3-yl)glycerol 3-phosphate + CO2 + H2O. It carries out the reaction chorismate + L-glutamine = anthranilate + pyruvate + L-glutamate + H(+). The protein operates within amino-acid biosynthesis; L-tryptophan biosynthesis; L-tryptophan from chorismate: step 1/5. It participates in amino-acid biosynthesis; L-tryptophan biosynthesis; L-tryptophan from chorismate: step 3/5. Its pathway is amino-acid biosynthesis; L-tryptophan biosynthesis; L-tryptophan from chorismate: step 4/5. Functionally, trifunctional enzyme bearing the Gln amidotransferase (GATase) domain of anthranilate synthase, indole-glycerolphosphate synthase, and phosphoribosylanthranilate isomerase activities. In Cryptococcus neoformans var. neoformans serotype D (strain JEC21 / ATCC MYA-565) (Filobasidiella neoformans), this protein is Multifunctional tryptophan biosynthesis protein (TRP1).